Reading from the N-terminus, the 60-residue chain is Homeobox protein engrailed-like A (60 aa).

The segment at residues Ala1–Gln41 is a DNA-binding region (homeobox).

The protein belongs to the engrailed homeobox family.

Its subcellular location is the nucleus. This chain is Homeobox protein engrailed-like A, found in Myxine glutinosa (Atlantic hagfish).